A 332-amino-acid polypeptide reads, in one-letter code: Monoterpene synthase 25 (332 aa).

Positions 115, 180, 240, 244, and 248 each coordinate Mg(2+). The short motif at 115-121 is the DDXXXXD motif element; the sequence is DDPVVFD. The NSE/DTE motif signature appears at 240-248; it reads NDILSFYKE.

The protein belongs to the trichodiene synthase family. It depends on Mg(2+) as a cofactor.

Terpene cyclase that catalyzes the cyclization of geranyl diphosphate (GPP) to myrcene and linalool. The polypeptide is Monoterpene synthase 25 (Postia placenta (strain ATCC 44394 / Madison 698-R) (Brown rot fungus)).